The primary structure comprises 340 residues: Protein B17 (340 aa).

Belongs to the orthopoxvirus B17 protein family.

This Variola virus (isolate Human/India/Ind3/1967) (VARV) protein is Protein B17.